The sequence spans 83 residues: MKGLILFICGFMMIGVILAKEGYPMDHEGCKFSCFIRPSGFCERYCKTHLSASTGYCAWPACYCYGVPANQKVWDYYNNKCGK.

Positions Met1–Ala19 are cleaved as a signal peptide. Residues Lys20–Gly82 enclose the LCN-type CS-alpha/beta domain. 4 cysteine pairs are disulfide-bonded: Cys30/Cys81, Cys34/Cys57, Cys42/Cys62, and Cys46/Cys64. A Cysteine amide modification is found at Cys81.

This sequence belongs to the long (4 C-C) scorpion toxin superfamily. Sodium channel inhibitor family. Beta subfamily. In terms of tissue distribution, expressed by the venom gland.

Its subcellular location is the secreted. In terms of biological role, beta toxins bind voltage-independently at site-4 of sodium channels (Nav) and shift the voltage of activation toward more negative potentials thereby affecting sodium channel activation and promoting spontaneous and repetitive firing. This is Toxin To12 from Tityus obscurus (Amazonian scorpion).